We begin with the raw amino-acid sequence, 243 residues long: Ribosomal RNA small subunit methyltransferase J (243 aa).

S-adenosyl-L-methionine contacts are provided by residues 112-113 and aspartate 164; that span reads ER.

Belongs to the methyltransferase superfamily. RsmJ family.

It localises to the cytoplasm. The catalysed reaction is guanosine(1516) in 16S rRNA + S-adenosyl-L-methionine = N(2)-methylguanosine(1516) in 16S rRNA + S-adenosyl-L-homocysteine + H(+). In terms of biological role, specifically methylates the guanosine in position 1516 of 16S rRNA. The chain is Ribosomal RNA small subunit methyltransferase J from Legionella pneumophila (strain Lens).